Here is a 346-residue protein sequence, read N- to C-terminus: D-alanine--D-alanine ligase (346 aa).

An ATP-grasp domain is found at 133 to 327 (KLYAKSVGVK…ALADQISLEK (195 aa)). Residue 159–211 (LSFPCIIKPARLGSSIGISIVKDEKDLEYAKDVGFEFDNDLVVEEFKNNIKEY) coordinates ATP. 3 residues coordinate Mg(2+): aspartate 284, glutamate 296, and asparagine 298.

It belongs to the D-alanine--D-alanine ligase family. Requires Mg(2+) as cofactor. Mn(2+) serves as cofactor.

The protein localises to the cytoplasm. It carries out the reaction 2 D-alanine + ATP = D-alanyl-D-alanine + ADP + phosphate + H(+). Its pathway is cell wall biogenesis; peptidoglycan biosynthesis. Functionally, cell wall formation. The chain is D-alanine--D-alanine ligase from Campylobacter jejuni subsp. jejuni serotype O:6 (strain 81116 / NCTC 11828).